Consider the following 1829-residue polypeptide: Sodium channel protein type 4 subunit alpha A (1829 aa).

At 1–124 (MARLLPPTGT…RGAIKILIHS (124 aa)) the chain is on the cytoplasmic side. Residues 32–52 (STREELEGAEEEPQAPSSDLE) are disordered. An I repeat occupies 106-421 (CISPFSIVRR…VVAMAYDEQN (316 aa)). The chain crosses the membrane as a helical span at residues 125–143 (LFSMFIMITILSNCVFMTM). At 144-150 (SNPPAWS) the chain is on the extracellular side. A helical membrane pass occupies residues 151-171 (KTVEYVFTGIYTFEATVKVLS). Residues 172–185 (RGFCIGPFTFLRDP) lie on the Cytoplasmic side of the membrane. A helical membrane pass occupies residues 186 to 203 (WNWLDFMVISMAYVTEFV). Residues 204–209 (DLGNVS) are Extracellular-facing. Residue Asn-207 is glycosylated (N-linked (GlcNAc...) asparagine). The chain crosses the membrane as a helical span at residues 210–226 (ALRTFRVLRALKTITVI). The Cytoplasmic portion of the chain corresponds to 227–245 (PGLKTIVGALIQSVKKMID). The helical transmembrane segment at 246-265 (VMILTIFALAVFALIGLQLF) threads the bilayer. At 266–358 (MGNLRQKCIR…PNYGYTSYDN (93 aa)) the chain is on the extracellular side. Cysteines 273 and 327 form a disulfide. Asn-280, Asn-293, and Asn-329 each carry an N-linked (GlcNAc...) asparagine glycan. The cysteines at positions 336 and 342 are disulfide-linked. Residues 359-383 (FGWAFLALFRLMTQDFWENLFQLTL) constitute an intramembrane region (pore-forming). The Extracellular portion of the chain corresponds to 384 to 390 (RAAGKTY). Residues 391-411 (MIFFVVVIFLGSFYLINLILA) traverse the membrane as a helical segment. Residues 412 to 582 (VVAMAYDEQN…KWVHFVVMDP (171 aa)) are Cytoplasmic-facing. Residues 446–467 (ETGSKASLASQKTQSRGSNRTG) show a composition bias toward polar residues. Residues 446–468 (ETGSKASLASQKTQSRGSNRTGS) form a disordered region. The II repeat unit spans residues 564 to 836 (CCAPWILFKK…QIAIGRITRG (273 aa)). Residues 583 to 601 (FVDLGITICIVLNTLFMAM) traverse the membrane as a helical segment. The Extracellular portion of the chain corresponds to 602 to 612 (EHYPMSPHFEH). The chain crosses the membrane as a helical span at residues 613-632 (VLSVGNLVFTGIFTAEMVFK). At 633-646 (LIAMDPYYYFQVGW) the chain is on the cytoplasmic side. The chain crosses the membrane as a helical span at residues 647 to 666 (NIFDSIIVTLSLVELGLANV). The Extracellular portion of the chain corresponds to 667-668 (QG). The chain crosses the membrane as a helical span at residues 669-686 (LSVLRSFRLLRVFKLAKS). Topologically, residues 687-702 (WPTLNMLIKIIGNSVG) are cytoplasmic. The chain crosses the membrane as a helical span at residues 703 to 721 (ALGNLTLVLAIIVFIFAVV). At 722 to 750 (GMQLFGKSYKDCVCKISEDCELPRWHMND) the chain is on the extracellular side. Cys-735 and Cys-741 are joined by a disulfide. An intramembrane region (pore-forming) is located at residues 751 to 771 (FFHSFLIVFRILCGEWIETMW). At 772-782 (DCMEVAGASMC) the chain is on the extracellular side. Cys-773 and Cys-782 are joined by a disulfide. Residues 783–801 (LIVFMMVMVIGNLVVLNLF) form a helical membrane-spanning segment. The Cytoplasmic segment spans residues 802 to 998 (LALLLSSFSG…TCFTIVEHDY (197 aa)). The interval 901–957 (SDVEEDEDSESSDEEDAKATLNDGDSSVCSTVDYQPPEPEPEPEEVEEEEPEPEEPE) is disordered. Residues 902–916 (DVEEDEDSESSDEED) are compositionally biased toward acidic residues. Residues 923–933 (DGDSSVCSTVD) show a composition bias toward polar residues. Positions 939–957 (PEPEPEEVEEEEPEPEEPE) are enriched in acidic residues. An III repeat occupies 979–1292 (WGKKWWNLRR…KKYYNAMKKL (314 aa)). The helical transmembrane segment at 999-1016 (FETFIIFMILLSSGALAF) threads the bilayer. At 1017–1029 (EDINIERRRVIKT) the chain is on the extracellular side. The helical transmembrane segment at 1030–1048 (ILEYADKVFTYIFIVEMLL) threads the bilayer. At 1049–1062 (KWVAYGFKTYFTNA) the chain is on the cytoplasmic side. Residues 1063-1081 (WCWLDFLIVDVSLVSLTAN) form a helical membrane-spanning segment. Topologically, residues 1082–1089 (LMGYSELG) are extracellular. A helical transmembrane segment spans residues 1090–1108 (AIKSLRTLRALRPLRALSR). Over 1109 to 1125 (FEGMRVVVNALVGAIPS) the chain is Cytoplasmic. The chain crosses the membrane as a helical span at residues 1126–1145 (IFNVLLVCLIFWLIFSIMGV). At 1146-1196 (NLFAGKFYHCINTTTEERIPMDVVNNKSDCMALMYTNEVRWVNVKVNYDNV) the chain is on the extracellular side. Cysteines 1155 and 1175 form a disulfide. Residues Asn-1157 and Asn-1171 are each glycosylated (N-linked (GlcNAc...) asparagine). An intramembrane region (pore-forming) is located at residues 1197–1218 (GLGYLSLLQIATFKGWMDIMYA). Residues 1219-1235 (AVDSREVDEQPSYEINL) lie on the Extracellular side of the membrane. The chain crosses the membrane as a helical span at residues 1236–1257 (YMYLYFVIFIIFGSFFTLNLFI). The Cytoplasmic segment spans residues 1258–1320 (GVIIDNFNQQ…LVFDFISKQF (63 aa)). The important for rapid channel inactivation stretch occupies residues 1276–1278 (IFM). The stretch at 1301 to 1599 (IPRPSNIIQG…WEKFDVDATQ (299 aa)) is one IV repeat. A helical membrane pass occupies residues 1321–1338 (FDIFIMVLICLNMVTMMI). The Extracellular portion of the chain corresponds to 1339-1349 (ETDDQSAEKEY). A helical membrane pass occupies residues 1350–1368 (VLYQINLVFIVVFTSECVL). At 1369–1380 (KLFALRQYFFTI) the chain is on the cytoplasmic side. The helical transmembrane segment at 1381–1398 (GWNVFDFVVVILSIAGLM) threads the bilayer. Topologically, residues 1399-1411 (LSDIIEKYFVSPT) are extracellular. A helical membrane pass occupies residues 1412-1428 (LFRVIRLARIGRVLRLI). The Cytoplasmic segment spans residues 1429–1447 (RGAKGIRTLLFALMMSLPA). A helical membrane pass occupies residues 1448–1465 (LFNIGLLLFLIMFIFSIF). The Extracellular segment spans residues 1466 to 1487 (GMSNFAYVKKQAGIDDIFNFET). An intramembrane region (pore-forming) is located at residues 1488–1510 (FGGSIICLFEITTSAGWDGLLLP). Topologically, residues 1511-1540 (ILNSGPPDCDPDFENPGTDVRGNCGNPGMG) are extracellular. Cys-1519 and Cys-1534 are disulfide-bonded. Residues 1541–1563 (IMFFCSYIIMSFLVVVNMYIAII) traverse the membrane as a helical segment. The Cytoplasmic segment spans residues 1564–1829 (LENFNNAQEE…NATTIKESIV (266 aa)). Residues 1693–1722 (EERAAIAVQRIYRRHLLKRAIRYACFMRRS) enclose the IQ domain. The interval 1765–1786 (PMRPNSQPPKPSQVTQTRASVT) is disordered.

Belongs to the sodium channel (TC 1.A.1.10) family. Nav1.4/SCN4A subfamily. As to quaternary structure, voltage-gated sodium (Nav) channels consist of an ion-conducting alpha subunit which is functional on its own associated with regulatory beta subunits. As to expression, expressed in skeletal muscle, brain, spinal cord, and eye.

Its subcellular location is the cell membrane. It carries out the reaction Na(+)(in) = Na(+)(out). Its function is as follows. Pore-forming subunit of a voltage-gated sodium (Nav) channel that directly mediates the depolarizing phase of action potentials in excitable membranes. Navs, also called VGSCs (voltage-gated sodium channels) or VDSCs (voltage-dependent sodium channels), operate by switching between closed and open conformations depending on the voltage difference across the membrane. In the open conformation they allow Na(+) ions to selectively pass through the pore, along their electrochemical gradient. The influx of Na+ ions provokes membrane depolarization, initiating the propagation of electrical signals throughout cells and tissues. The chain is Sodium channel protein type 4 subunit alpha A (scn4aa) from Danio rerio (Zebrafish).